We begin with the raw amino-acid sequence, 127 residues long: Glycine cleavage system H protein (127 aa).

The region spanning Val24–Lys106 is the Lipoyl-binding domain. The residue at position 65 (Lys65) is an N6-lipoyllysine.

This sequence belongs to the GcvH family. As to quaternary structure, the glycine cleavage system is composed of four proteins: P, T, L and H. (R)-lipoate is required as a cofactor.

The glycine cleavage system catalyzes the degradation of glycine. The H protein shuttles the methylamine group of glycine from the P protein to the T protein. This is Glycine cleavage system H protein from Laribacter hongkongensis (strain HLHK9).